A 245-amino-acid polypeptide reads, in one-letter code: Mitochondrial import inner membrane translocase subunit Tim21 (245 aa).

The transit peptide at 1-18 directs the protein to the mitochondrion; that stretch reads MICAFLRVVRHAEKLHGS. The disordered stretch occupies residues 64 to 97; the sequence is FWTQGPDPRKAKEDSSKQVSINRNQREETGVSTS. The segment covering 70 to 79 has biased composition (basic and acidic residues); it reads DPRKAKEDSS. The helical transmembrane segment at 108–128 threads the bilayer; it reads TYLIVVLFGVSITGSLLYTIF.

It belongs to the TIM21 family. In terms of assembly, component of the TIM23 complex. Component of the MITRAC (mitochondrial translation regulation assembly intermediate of cytochrome c oxidase complex) complex, the core components of this complex being COA3/MITRAC12 and COX14. Interacts with COA3 and MT-CO1/COX1.

Its subcellular location is the mitochondrion membrane. Participates in the translocation of transit peptide-containing proteins across the mitochondrial inner membrane. Also required for assembly of mitochondrial respiratory chain complex I and complex IV as component of the MITRAC (mitochondrial translation regulation assembly intermediate of cytochrome c oxidase complex) complex. Probably shuttles between the presequence translocase and respiratory-chain assembly intermediates in a process that promotes incorporation of early nuclear-encoded subunits into these complexes. The polypeptide is Mitochondrial import inner membrane translocase subunit Tim21 (Timm21) (Rattus norvegicus (Rat)).